Reading from the N-terminus, the 336-residue chain is Plant-specific TFIIB-related protein 2 (336 aa).

A TFIIB-type zinc finger spans residues 2 to 34 (EEETCLDCKRPTIMVVDHSSGDTICSECGLVLE). Zn(2+) contacts are provided by Cys6, Cys9, Cys26, and Cys29.

As to expression, specifically expressed in reproductive organs and seeds.

It localises to the nucleus. Plant-specific TFIIB-related protein involved in the regulation of endosperm proliferation during the syncytial phase of endosperm development. Does not contribute to RNA polymerase IV or V activities in reproductive tissues. This is Plant-specific TFIIB-related protein 2 from Arabidopsis thaliana (Mouse-ear cress).